The sequence spans 416 residues: CinA-like protein (416 aa).

This sequence belongs to the CinA family.

This Rippkaea orientalis (strain PCC 8801 / RF-1) (Cyanothece sp. (strain PCC 8801)) protein is CinA-like protein.